Consider the following 691-residue polypeptide: DNA ligase (691 aa).

NAD(+) is bound by residues 41-45, 90-91, and glutamate 130; these read DAEYD and SL. Lysine 132 acts as the N6-AMP-lysine intermediate in catalysis. NAD(+) contacts are provided by arginine 153, glutamate 190, lysine 307, and lysine 331. Positions 425, 428, 443, and 449 each coordinate Zn(2+). Residues 610–691 enclose the BRCT domain; it reads APQGVLAGKT…MHTLLEGHAR (82 aa).

Belongs to the NAD-dependent DNA ligase family. LigA subfamily. Mg(2+) is required as a cofactor. Requires Mn(2+) as cofactor.

It catalyses the reaction NAD(+) + (deoxyribonucleotide)n-3'-hydroxyl + 5'-phospho-(deoxyribonucleotide)m = (deoxyribonucleotide)n+m + AMP + beta-nicotinamide D-nucleotide.. DNA ligase that catalyzes the formation of phosphodiester linkages between 5'-phosphoryl and 3'-hydroxyl groups in double-stranded DNA using NAD as a coenzyme and as the energy source for the reaction. It is essential for DNA replication and repair of damaged DNA. This chain is DNA ligase, found in Burkholderia pseudomallei (strain K96243).